We begin with the raw amino-acid sequence, 301 residues long: Sulfate adenylyltransferase subunit 2 (301 aa).

A disordered region spans residues 279–301 (RQGRMIDHDSSGSMEEKKKQGYF).

The protein belongs to the PAPS reductase family. CysD subfamily. Heterodimer composed of CysD, the smaller subunit, and CysN.

The catalysed reaction is sulfate + ATP + H(+) = adenosine 5'-phosphosulfate + diphosphate. It participates in sulfur metabolism; hydrogen sulfide biosynthesis; sulfite from sulfate: step 1/3. With CysN forms the ATP sulfurylase (ATPS) that catalyzes the adenylation of sulfate producing adenosine 5'-phosphosulfate (APS) and diphosphate, the first enzymatic step in sulfur assimilation pathway. APS synthesis involves the formation of a high-energy phosphoric-sulfuric acid anhydride bond driven by GTP hydrolysis by CysN coupled to ATP hydrolysis by CysD. The polypeptide is Sulfate adenylyltransferase subunit 2 (Marinomonas sp. (strain MWYL1)).